The primary structure comprises 23 residues: Potassium channel toxin alpha-KTx 13.4 (23 aa).

Intrachain disulfides connect Cys2–Cys15, Cys5–Cys20, and Cys9–Cys22. Residues 13–20 (GKCINGKC) are interaction with Ca(2+)-activated K(+) channels. At Tyr23 the chain carries Tyrosine amide.

As to expression, expressed by the venom gland.

The protein localises to the secreted. Its function is as follows. Blocks the potassium channel Shaker B. The protein is Potassium channel toxin alpha-KTx 13.4 of Tityus stigmurus (Brazilian scorpion).